The chain runs to 282 residues: NFU1 iron-sulfur cluster scaffold homolog, mitochondrial (282 aa).

Residues Met1–Phe27 constitute a mitochondrion transit peptide. The nifU stretch occupies residues Ile178–Val246. 2 residues coordinate [4Fe-4S] cluster: Cys215 and Cys218. Residues Lys263–Asn282 form a disordered region.

It belongs to the NifU family.

It localises to the mitochondrion. Its function is as follows. Molecular scaffold for [Fe-S] cluster assembly of mitochondrial iron-sulfur proteins. This is NFU1 iron-sulfur cluster scaffold homolog, mitochondrial from Drosophila persimilis (Fruit fly).